A 617-amino-acid chain; its full sequence is Actin-binding protein (617 aa).

Positions 7–136 (DATTHSRDIE…DEEELLTKIS (130 aa)) constitute an ADF-H domain. Disordered stretches follow at residues 169–223 (PSLA…LSDN) and 325–574 (AEKK…GEDN). The stretch at 202–211 (ADDWDEPEIK) is one 1-1 repeat. Positions 202-600 (ADDWDEPEIK…DDDWWLGELE (399 aa)) are 3 X 10 AA approximate repeats. Basic and acidic residues-rich tracts occupy residues 340-351 (EEQKPVETKTEI) and 359-375 (DEMK…KLGA). Residues 400–411 (TFGQPAANSKPA) are compositionally biased toward polar residues. Composition is skewed to acidic residues over residues 437–453 (EHEE…DEDE), 483–502 (EPVE…EEEA), and 516–530 (PEPE…EEEA). 4 tandem repeats follow at residues 444–453 (DDDWGEDEDE), 495–510 (EEEE…LPSR), 523–538 (EEEE…LPSR), and 591–600 (DDDWWLGELE). Positions 495-538 (EEEEEEEAPAPSLPSRNAAPEPEPEQPQEEEEEEEAPAPSLPSR) are 2 X 16 AA repeats of E(7)-A-P-A-P-S-L-P-S-R. Residues 557-617 (AEAPWATAEY…FPSNYVVLGN (61 aa)) form the SH3 domain.

The protein resides in the cytoplasm. It is found in the cytoskeleton. In terms of biological role, may be involved in the spatial organization of cell surface growth. An overproduction of ABP1 causes the assembly of the cortical actin skeleton at inappropriate sites on the cell surface, resulting in delocalized surface growth. The chain is Actin-binding protein (ABP1) from Maudiozyma exigua (Yeast).